The chain runs to 363 residues: Holliday junction branch migration complex subunit RuvB (363 aa).

The interval 1–32 is disordered; it reads MAIQTDSFAAAPAPSSGSTRRLISAAPTSPNE. A compositionally biased stretch (low complexity) spans 7-18; that stretch reads SFAAAPAPSSGS. The segment at 13–200 is large ATPase domain (RuvB-L); it reads APSSGSTRRL…FGIVARLEFY (188 aa). ATP-binding positions include Leu-39, Arg-40, Gly-81, Lys-84, Thr-85, Thr-86, 147 to 149, Arg-190, Tyr-200, and Arg-237; that span reads EDY. Thr-85 serves as a coordination point for Mg(2+). The segment at 201-271 is small ATPAse domain (RuvB-S); sequence TPEELVRIVT…IAELALTMLD (71 aa). A head domain (RuvB-H) region spans residues 274–363; it reads PRGFDVMDRK…GPVGSDLFEG (90 aa). Residues Arg-329 and Arg-334 each contribute to the DNA site.

The protein belongs to the RuvB family. Homohexamer. Forms an RuvA(8)-RuvB(12)-Holliday junction (HJ) complex. HJ DNA is sandwiched between 2 RuvA tetramers; dsDNA enters through RuvA and exits via RuvB. An RuvB hexamer assembles on each DNA strand where it exits the tetramer. Each RuvB hexamer is contacted by two RuvA subunits (via domain III) on 2 adjacent RuvB subunits; this complex drives branch migration. In the full resolvosome a probable DNA-RuvA(4)-RuvB(12)-RuvC(2) complex forms which resolves the HJ.

Its subcellular location is the cytoplasm. The enzyme catalyses ATP + H2O = ADP + phosphate + H(+). The RuvA-RuvB-RuvC complex processes Holliday junction (HJ) DNA during genetic recombination and DNA repair, while the RuvA-RuvB complex plays an important role in the rescue of blocked DNA replication forks via replication fork reversal (RFR). RuvA specifically binds to HJ cruciform DNA, conferring on it an open structure. The RuvB hexamer acts as an ATP-dependent pump, pulling dsDNA into and through the RuvAB complex. RuvB forms 2 homohexamers on either side of HJ DNA bound by 1 or 2 RuvA tetramers; 4 subunits per hexamer contact DNA at a time. Coordinated motions by a converter formed by DNA-disengaged RuvB subunits stimulates ATP hydrolysis and nucleotide exchange. Immobilization of the converter enables RuvB to convert the ATP-contained energy into a lever motion, pulling 2 nucleotides of DNA out of the RuvA tetramer per ATP hydrolyzed, thus driving DNA branch migration. The RuvB motors rotate together with the DNA substrate, which together with the progressing nucleotide cycle form the mechanistic basis for DNA recombination by continuous HJ branch migration. Branch migration allows RuvC to scan DNA until it finds its consensus sequence, where it cleaves and resolves cruciform DNA. The chain is Holliday junction branch migration complex subunit RuvB from Leptothrix cholodnii (strain ATCC 51168 / LMG 8142 / SP-6) (Leptothrix discophora (strain SP-6)).